The primary structure comprises 237 residues: DNA repair protein RecO (237 aa).

It belongs to the RecO family.

Functionally, involved in DNA repair and RecF pathway recombination. This chain is DNA repair protein RecO, found in Rickettsia akari (strain Hartford).